A 594-amino-acid polypeptide reads, in one-letter code: Glutamate decarboxylase 1 (594 aa).

Low complexity predominate over residues 1-13 (MASSTPSSSATSS). The disordered stretch occupies residues 1 to 23 (MASSTPSSSATSSNAGADPNTTN). A Phosphoserine modification is found at S78. 190–192 (QLS) contacts 4-aminobutanoate. K405 carries the N6-(pyridoxal phosphate)lysine modification. R567 lines the 4-aminobutanoate pocket.

The protein belongs to the group II decarboxylase family. Homodimer. Requires pyridoxal 5'-phosphate as cofactor.

It catalyses the reaction L-glutamate + H(+) = 4-aminobutanoate + CO2. Its function is as follows. Catalyzes the synthesis of the inhibitory neurotransmitter gamma-aminobutyric acid (GABA) with pyridoxal 5'-phosphate as cofactor. This Pan troglodytes (Chimpanzee) protein is Glutamate decarboxylase 1 (GAD1).